Reading from the N-terminus, the 141-residue chain is Hemoglobin subunit alpha (141 aa).

In terms of domain architecture, Globin spans 1 to 141 (VLSPADKNNV…VSTVLTSKYR (141 aa)). Serine 3 is subject to Phosphoserine. 2 positions are modified to N6-succinyllysine: lysine 7 and lysine 11. N6-acetyllysine; alternate is present on lysine 16. Lysine 16 bears the N6-succinyllysine; alternate mark. Tyrosine 24 carries the phosphotyrosine modification. Serine 35 carries the post-translational modification Phosphoserine. Lysine 40 is modified (N6-succinyllysine). At serine 49 the chain carries Phosphoserine. Residue histidine 58 coordinates O2. Histidine 87 is a binding site for heme b. Serine 102 carries the post-translational modification Phosphoserine. Threonine 108 bears the Phosphothreonine mark. Phosphoserine occurs at positions 124 and 131. Threonine 134 and threonine 137 each carry phosphothreonine. Phosphoserine is present on serine 138.

It belongs to the globin family. In terms of assembly, heterotetramer of two alpha chains and two beta chains. In terms of tissue distribution, red blood cells.

In terms of biological role, involved in oxygen transport from the lung to the various peripheral tissues. Functionally, hemopressin acts as an antagonist peptide of the cannabinoid receptor CNR1. Hemopressin-binding efficiently blocks cannabinoid receptor CNR1 and subsequent signaling. This Urocitellus townsendii (Townsend's ground squirrel) protein is Hemoglobin subunit alpha (HBA).